The chain runs to 142 residues: Large ribosomal subunit protein uL11 (142 aa).

The protein belongs to the universal ribosomal protein uL11 family. As to quaternary structure, part of the ribosomal stalk of the 50S ribosomal subunit. Interacts with L10 and the large rRNA to form the base of the stalk. L10 forms an elongated spine to which L12 dimers bind in a sequential fashion forming a multimeric L10(L12)X complex. In terms of processing, one or more lysine residues are methylated.

Forms part of the ribosomal stalk which helps the ribosome interact with GTP-bound translation factors. The sequence is that of Large ribosomal subunit protein uL11 from Photorhabdus laumondii subsp. laumondii (strain DSM 15139 / CIP 105565 / TT01) (Photorhabdus luminescens subsp. laumondii).